The chain runs to 229 residues: MSIKIKNFKKNIIINNNNFINENNCNNNNKNNIVQLCIMGDGGVGKTAVTTQFISNHFVYYYDPTIEDSYRKQICVSDKSYILDILDTAGQDELTAMRDQWIRSCEGFVLVYSITCKSSFNQVLNFREQIIRVLDRDDVPIMMIGNKSDLVNERQVTYHEGKELAQRLGMSFMEVSAKNRSNIDEVFHEAVCCVKRKEELYRIKSKHVKILKKNKNPLKKKINEICKVM.

GTP is bound at residue 40–47 (GDGGVGKT). The Effector region signature appears at 62–70 (YDPTIEDSY). GTP is bound by residues 87-91 (DTAGQ) and 146-149 (NKSD). Residue C226 is modified to Cysteine methyl ester. The S-geranylgeranyl cysteine moiety is linked to residue C226. A propeptide spans 227 to 229 (KVM) (removed in mature form).

This sequence belongs to the small GTPase superfamily. Ras family.

Its subcellular location is the cell membrane. The catalysed reaction is GTP + H2O = GDP + phosphate + H(+). Functionally, ras proteins bind GDP/GTP and possess intrinsic GTPase activity. In Dictyostelium discoideum (Social amoeba), this protein is Ras-like protein rasV (rasV).